We begin with the raw amino-acid sequence, 612 residues long: U-box domain-containing protein 11 (612 aa).

A coiled-coil region spans residues 127–196 (DEVGEQVELA…LHFGEEEEKQ (70 aa)). Residues 240–314 (TIPVDFLCPV…SRWCAEHNIE (75 aa)) form the U-box domain. ARM repeat units lie at residues 363-402 (TDNR…NLSI), 404-443 (ENNK…SLSL), 445-484 (DENK…NLCI), 486-526 (HGNK…VLAN), and 528-567 (QDAK…SLCK).

It catalyses the reaction S-ubiquitinyl-[E2 ubiquitin-conjugating enzyme]-L-cysteine + [acceptor protein]-L-lysine = [E2 ubiquitin-conjugating enzyme]-L-cysteine + N(6)-ubiquitinyl-[acceptor protein]-L-lysine.. Its pathway is protein modification; protein ubiquitination. Its function is as follows. Functions as an E3 ubiquitin ligase. The chain is U-box domain-containing protein 11 (PUB11) from Arabidopsis thaliana (Mouse-ear cress).